The chain runs to 271 residues: Solute carrier family 66 member 2 (271 aa).

A run of 3 helical transmembrane segments spans residues 7–27, 49–69, and 72–92; these read GWLLVPLHQLVSWVAAGAMVF, FSTHVCLVLLVANILRILFWF, and HFESPLLWQSIVMILTMLLML. Residues 14–80 form the PQ-loop 1 domain; sequence HQLVSWVAAG…RHFESPLLWQ (67 aa). S110 is modified (phosphoserine). Helical transmembrane passes span 145–165, 168–188, and 232–252; these read DYVQCVLAFTGVAGYITYLSI, ALFVETLGFLAVLTEAMLGVP, and VCGLLQVMVDLVILGQAYAFA. Positions 178-233 constitute a PQ-loop 2 domain; the sequence is AVLTEAMLGVPQLYRNYCHRSTEGMSLKMVLMWTSGDTFKTAYFLLNGAPLQFSVC.

It localises to the membrane. The polypeptide is Solute carrier family 66 member 2 (Slc66a2) (Mus musculus (Mouse)).